The following is a 578-amino-acid chain: Phosphatase DCR2 (578 aa).

116-123 serves as a coordination point for ATP; sequence GRRWFGKS.

The protein resides in the cytoplasm. Functionally, required for cell cycle progression. Has a role in the completion of START. The sequence is that of Phosphatase DCR2 (DCR2) from Saccharomyces cerevisiae (strain ATCC 204508 / S288c) (Baker's yeast).